Consider the following 171-residue polypeptide: Translationally-controlled tumor protein homolog (171 aa).

Residues 1–171 (MIIYKDIITG…FKDGLEIEKC (171 aa)) enclose the TCTP domain.

The protein belongs to the TCTP family.

It localises to the cytoplasm. Functionally, involved in calcium binding and microtubule stabilization. In Danio rerio (Zebrafish), this protein is Translationally-controlled tumor protein homolog (tpt1).